Reading from the N-terminus, the 341-residue chain is Phenylalanine--tRNA ligase alpha subunit (341 aa).

E254 contacts Mg(2+).

Belongs to the class-II aminoacyl-tRNA synthetase family. Phe-tRNA synthetase alpha subunit type 1 subfamily. In terms of assembly, tetramer of two alpha and two beta subunits. Mg(2+) serves as cofactor.

Its subcellular location is the cytoplasm. It carries out the reaction tRNA(Phe) + L-phenylalanine + ATP = L-phenylalanyl-tRNA(Phe) + AMP + diphosphate + H(+). This is Phenylalanine--tRNA ligase alpha subunit from Chlorobium limicola (strain DSM 245 / NBRC 103803 / 6330).